The sequence spans 483 residues: Cyclic AMP-dependent transcription factor ATF-7 (483 aa).

The transactivation domain stretch occupies residues 1-285 (MGDDRPFVCN…GMVVGTASTM (285 aa)). The segment at 7–31 (FVCNAPGCGQRFTNEDHLAVHKHKH) adopts a C2H2-type zinc-finger fold. A Phosphothreonine; by MAPK11 modification is found at Thr51. Phosphothreonine is present on residues Thr53 and Thr101. A Glycyl lysine isopeptide (Lys-Gly) (interchain with G-Cter in SUMO1) cross-link involves residue Lys107. 2 disordered regions span residues 110–148 (EPVEVDSSPPDSPASSPCSPPLKEKEVTPKPVLISTPTP) and 299–345 (HPDA…NRAA). Composition is skewed to low complexity over residues 114–126 (VDSSPPDSPASSP) and 307–320 (QPQVSPAQPTPSTG). The tract at residues 325 to 483 (RTVDEDPDER…MTPQSQSAGR (159 aa)) is essential for binding adenovirus 2 E1A. The span at 326–343 (TVDEDPDERRQRFLERNR) shows a compositional bias: basic and acidic residues. Residues 332-395 (DERRQRFLER…AQLKQLLLAH (64 aa)) enclose the bZIP domain. Residues 334 to 354 (RRQRFLERNRAAASRCRQKRK) form a basic motif region. The interval 360–388 (LEKKAEELTSQNIQLSNEVTLLRNEVAQL) is leucine-zipper. The segment at 407 to 439 (TQGYLESPKESSEPTGSPAPVIQHSSATAPSNG) is disordered. Phosphoserine is present on residues Ser413 and Ser423. The span at 429–439 (QHSSATAPSNG) shows a compositional bias: polar residues.

This sequence belongs to the bZIP family. As to quaternary structure, homodimer; binds DNA as homodimer. Heterodimer; heterodimerizes with other members of ATF family and with JUN family members. Interacts with JNK2; the interaction does not phosphorylate ATF7 but acts as a docking site for other ATF-associated partners such as JUN family members. Interacts (via its transactivation domain) with TAF12 (isoforms TAFII15 and TAFII20); the interaction potentiates the transactivation activity (isoform TAFII20 only) and is inhibited by ATF7 sumoylation. Interacts with TAF4; the interaction inhibits the TAF12-dependent transactivation. Interacts with MAPK9; the interaction does not phosphorylate ATF7 but acts as a docking site for ATF7-associated partners such as JUN. Interacts with Ku complex components XRCC6 and XRCC7. Interacts with TERT. (Microbial infection) Interacts with adenovirus 2 E1A; the interaction enhances the ATF7-mediated viral transactivation activity which requires the zinc-binding domains of both E1A and ATF7. Post-translationally, on EGF stimulation, phosphorylated first on Thr-53 allowing subsequent phosphorylation on Thr-51. This latter phosphorylation prevents sumoylation, increases binding to TAF12 and enhances transcriptional activity. Sumoylation delays nuclear localization and inhibits transactivation activity through preventing binding to TAF12. RANBP2 appears to be the specific E3 ligase. In terms of processing, on EGF stimulation, phosphorylated first on Thr-53 allowing subsequent phosphorylation on Thr-51. This latter phosphorylation prevents sumoylation, increases binding to TAF12 and enhances transcriptional activity. Social isolation stress as well as TNF-alpha also induce the phosphorylation of ATF7. Phosphorylated in proliferating colonic and small intestinal epithelial cells. Expressed in various tissues including heart, brain, placenta, lung and skeletal muscle. Highest levels in skeletal muscle. Lowest in lung and placenta. As to expression, strongly expressed in skeletal muscle. Also expressed at lower levels in heart and lung.

It localises to the nucleus. The protein localises to the nucleoplasm. It is found in the chromosome. The protein resides in the telomere. Its subcellular location is the cytoplasm. In terms of biological role, stress-responsive chromatin regulator that plays a role in various biological processes including innate immunological memory, adipocyte differentiation or telomerase regulation. In absence of stress, contributes to the formation of heterochromatin and heterochromatin-like structure by recruiting histone H3K9 tri- and di-methyltransferases thus silencing the transcription of target genes such as STAT1 in adipocytes, or genes involved in innate immunity in macrophages and adipocytes. Stress induces ATF7 phosphorylation that disrupts interactions with histone methyltransferase and enhances the association with coactivators containing histone acetyltransferase and/or histone demethylase, leading to disruption of the heterochromatin-like structure and subsequently transcriptional activation. In response to TNF-alpha, which is induced by various stresses, phosphorylated ATF7 and telomerase are released from telomeres leading to telomere shortening. Also plays a role in maintaining epithelial regenerative capacity and protecting against cell death during intestinal epithelial damage and repair. Functionally, acts as a dominant repressor of the E-selectin/NF-ELAM1/delta-A promoter. Acts as a negative regulator, inhibiting both ATF2 and ATF7 transcriptional activities. It may exert these effects by sequestrating in the cytoplasm the Thr-53 phosphorylating kinase, preventing activation. In Homo sapiens (Human), this protein is Cyclic AMP-dependent transcription factor ATF-7 (ATF7).